The chain runs to 115 residues: Ribonuclease P protein component (115 aa).

This sequence belongs to the RnpA family. As to quaternary structure, consists of a catalytic RNA component (M1 or rnpB) and a protein subunit.

It carries out the reaction Endonucleolytic cleavage of RNA, removing 5'-extranucleotides from tRNA precursor.. Functionally, RNaseP catalyzes the removal of the 5'-leader sequence from pre-tRNA to produce the mature 5'-terminus. It can also cleave other RNA substrates such as 4.5S RNA. The protein component plays an auxiliary but essential role in vivo by binding to the 5'-leader sequence and broadening the substrate specificity of the ribozyme. This Bacillus cereus (strain ATCC 10987 / NRS 248) protein is Ribonuclease P protein component.